The primary structure comprises 680 residues: Fermitin family homolog 2 (680 aa).

The interaction with membranes containing phosphatidylinositol phosphate stretch occupies residues 40–81 (HIGGVMLKLVEKLDVKKDWSDHALWWEKKRTWLLKTHWTLDK). Residues 141–162 (LKKPRDPTKKKKKKLDDQSEDE) are disordered. A phosphoserine mark is found at Ser159, Ser181, Ser339, and Ser351. One can recognise an FERM domain in the interval 189-661 (MTPTYDAHDG…GYIFLSTRAK (473 aa)). Residues 380-476 (KVFKPKKLTL…WMAACRLASK (97 aa)) enclose the PH domain. A 1,2-diacyl-sn-glycero-3-phospho-(1D-myo-inositol-3,4,5-trisphosphate) is bound at residue Lys383. The residue at position 666 (Ser666) is a Phosphoserine.

It belongs to the kindlin family. In terms of assembly, interacts with ITGB1; the interaction is inhibited in presence of ITGB1BP1. Interacts with FBLIM1. Interacts with active, unphosphorylated CTNNB1. Identified in a complex with CTNNB1 and TCF7L2/TCF4. Interacts with ILK, ITGB1 and ITGB3. As to expression, detected in adult heart muscle (at protein level). Detected in heart, skeletal muscle and testis.

It localises to the cytoplasm. The protein resides in the cell cortex. It is found in the cytoskeleton. Its subcellular location is the stress fiber. The protein localises to the cell junction. It localises to the focal adhesion. The protein resides in the membrane. It is found in the cell projection. Its subcellular location is the lamellipodium membrane. The protein localises to the nucleus. It localises to the myofibril. The protein resides in the sarcomere. It is found in the i band. Its subcellular location is the cell surface. Functionally, scaffolding protein that enhances integrin activation mediated by TLN1 and/or TLN2, but activates integrins only weakly by itself. Binds to membranes enriched in phosphoinositides. Enhances integrin-mediated cell adhesion onto the extracellular matrix and cell spreading; this requires both its ability to interact with integrins and with phospholipid membranes. Required for the assembly of focal adhesions. Participates in the connection between extracellular matrix adhesion sites and the actin cytoskeleton and also in the orchestration of actin assembly and cell shape modulation. Recruits FBLIM1 to focal adhesions. Plays a role in the TGFB1 and integrin signaling pathways. Stabilizes active CTNNB1 and plays a role in the regulation of transcription mediated by CTNNB1 and TCF7L2/TCF4 and in Wnt signaling. The chain is Fermitin family homolog 2 (Fermt2) from Mus musculus (Mouse).